We begin with the raw amino-acid sequence, 620 residues long: Cell fusion protein cfr1 (620 aa).

The Fibronectin type-III domain maps to 79–169; it reads LPSPPVLKLK…KHITIKTLRM (91 aa). In terms of domain architecture, BRCT spans 167–256; sequence LRMIDLTGIQ…RLVNVSGFYI (90 aa). Disordered regions lie at residues 287-566 and 588-620; these read QPKN…PEKA and KQSS…VNID. The segment covering 303-314 has biased composition (polar residues); the sequence is APQQTTQQGTQN. The span at 315–330 shows a compositional bias: low complexity; it reads SANAEPSSSASVPAEA. A compositionally biased stretch (polar residues) spans 352 to 375; sequence SKPNEAPTSSENIKADQPENSTKQ. Basic and acidic residues predominate over residues 382–392; sequence MQIKDAEEHSN. A compositionally biased stretch (polar residues) spans 393 to 406; it reads LESTPAAQQTSEVE. Residues 424–434 are compositionally biased toward low complexity; the sequence is NVNEENNTPET. Positions 445 to 468 are enriched in polar residues; it reads NTAAESLINQEETTSGEAVTKSTV. A compositionally biased stretch (acidic residues) spans 472-484; it reads ANEEEAEPNEIIE. A compositionally biased stretch (polar residues) spans 506–515; sequence NNANSENANG. Over residues 517–537 the composition is skewed to basic and acidic residues; that stretch reads TDEKIIEAPLDTKENSDDDKP.

Belongs to the CHS5 family.

It is found in the golgi apparatus. In terms of biological role, required for cell fusion, independently of fus1. Appears to have a role in transporting proteins that are involved in mating. May act as a scaffold to retain cell fusion proteins in the cisternae of the Golgi. Degraded at the onset of mating and this leads to release of cell fusion proteins. In Schizosaccharomyces pombe (strain 972 / ATCC 24843) (Fission yeast), this protein is Cell fusion protein cfr1 (cfr1).